The following is a 184-amino-acid chain: Gremlin-1 (184 aa).

Positions 1–24 are cleaved as a signal peptide; that stretch reads MNRTAYTVGALLLLLGTLLPTAEG. The disordered stretch occupies residues 23 to 77; the sequence is EGKKKGSQGAIPPPDKAQHNDSEQTQSPPQPGSRTRGRGQGRGTAMPGEEVLESS. The N-linked (GlcNAc...) asparagine glycan is linked to Asn-42. 4 disulfide bridges follow: Cys-94/Cys-144, Cys-108/Cys-158, Cys-118/Cys-176, and Cys-122/Cys-178. The region spanning 94-184 is the CTCK domain; it reads CKTQPLKQTI…QCRCISIDLD (91 aa).

It belongs to the DAN family. As to quaternary structure, homodimer; can also form homooligomers. Interacts with BMP2; can form higher oligomers with BMP2. Interacts with SLIT1 and SLIT2 in a glycosylation-dependent manner. As to expression, highly expressed in spleen and to a lesser extent in lung, skeletal muscle and kidney. Expressed only in non-transformed cells or primary fibroblasts in culture but not in established transformed or tumor derived cell lines. Broadly expressed in limb bud mesenchyme but restricted to the distal limb bud mesenchyme and concentrated posteriorly. Expressed in ovary especially in granulosa cells of follicles of type 4.

Its subcellular location is the secreted. In terms of biological role, cytokine that may play an important role during carcinogenesis and metanephric kidney organogenesis, as BMP a antagonist required for early limb outgrowth and patterning in maintaining the FGF4-SHH feedback loop. Down-regulates the BMP4 signaling in a dose-dependent manner. Antagonist of BMP2; inhibits BMP2-mediated differentiation of osteoblasts (in vitro). Acts as inhibitor of monocyte chemotaxis. In Mus musculus (Mouse), this protein is Gremlin-1 (Grem1).